Reading from the N-terminus, the 400-residue chain is Dual-specificity RNA methyltransferase RlmN (400 aa).

The active-site Proton acceptor is Glu-125. One can recognise a Radical SAM core domain in the interval 131–372 (ETDRGTLCVS…VRTPRGRDIL (242 aa)). Cys-138 and Cys-375 form a disulfide bridge. [4Fe-4S] cluster contacts are provided by Cys-145, Cys-149, and Cys-152. S-adenosyl-L-methionine is bound by residues 201 to 202 (GE), Ser-233, 255 to 257 (SLH), and Asn-332. Cys-375 acts as the S-methylcysteine intermediate in catalysis.

Belongs to the radical SAM superfamily. RlmN family. [4Fe-4S] cluster is required as a cofactor.

The protein resides in the cytoplasm. It catalyses the reaction adenosine(2503) in 23S rRNA + 2 reduced [2Fe-2S]-[ferredoxin] + 2 S-adenosyl-L-methionine = 2-methyladenosine(2503) in 23S rRNA + 5'-deoxyadenosine + L-methionine + 2 oxidized [2Fe-2S]-[ferredoxin] + S-adenosyl-L-homocysteine. It carries out the reaction adenosine(37) in tRNA + 2 reduced [2Fe-2S]-[ferredoxin] + 2 S-adenosyl-L-methionine = 2-methyladenosine(37) in tRNA + 5'-deoxyadenosine + L-methionine + 2 oxidized [2Fe-2S]-[ferredoxin] + S-adenosyl-L-homocysteine. Its function is as follows. Specifically methylates position 2 of adenine 2503 in 23S rRNA and position 2 of adenine 37 in tRNAs. m2A2503 modification seems to play a crucial role in the proofreading step occurring at the peptidyl transferase center and thus would serve to optimize ribosomal fidelity. The protein is Dual-specificity RNA methyltransferase RlmN of Bradyrhizobium diazoefficiens (strain JCM 10833 / BCRC 13528 / IAM 13628 / NBRC 14792 / USDA 110).